A 713-amino-acid chain; its full sequence is Forkhead box protein P2 (713 aa).

Polar residues predominate over residues 1 to 28 (MMQESATETISNSSMNQNGMSTLSSQLD). 2 disordered regions span residues 1–45 (MMQE…SEVS) and 279–337 (DNGI…TGAS). Low complexity predominate over residues 290-303 (TTNNSSSTTSSTTS). Residues 313-322 (SIVNGQSSVL) are compositionally biased toward polar residues. Over residues 324-335 (ARRDSSSHEETG) the composition is skewed to basic and acidic residues. The C2H2-type zinc finger occupies 344–369 (GVCKWPGCESICEDFGQFLKHLNNEH). A leucine-zipper region spans residues 386–407 (VQQLEIQLSKERERLQAMMTHL). The segment at 420–424 (PLNLV) is CTBP1-binding. The segment covering 436–457 (TSPQSLPQTPTTPTAPVTPITQ) has biased composition (low complexity). The segment at 436–463 (TSPQSLPQTPTTPTAPVTPITQGPSVIT) is disordered. The segment at residues 502-592 (RPPFTYATLI…SQKITGSPTL (91 aa)) is a DNA-binding region (fork-head). Disordered regions lie at residues 647–666 (LDHI…QPHI) and 676–713 (VIAE…EDLE). The segment covering 697 to 713 (LEDDREIEEEPLSEDLE) has biased composition (acidic residues).

Forms homodimers and heterodimers with FOXP1 and FOXP4. Dimerization is required for DNA-binding. Interacts with CTBP1. Interacts with FOXP1. Interacts with TBR1. Interacts with ZMYM2.

It localises to the nucleus. Functionally, transcriptional repressor that may play a role in the specification and differentiation of lung epithelium. May also play a role in developing neural, gastrointestinal and cardiovascular tissues. Can act with CTBP1 to synergistically repress transcription but CTPBP1 is not essential. Plays a role in synapse formation by regulating SRPX2 levels. The polypeptide is Forkhead box protein P2 (FOXP2) (Hylobates lar (Lar gibbon)).